A 368-amino-acid chain; its full sequence is Trans-enoyl reductase thnE (368 aa).

53-56 (VDVK) contributes to the NADP(+) binding site. 140–147 (LATATAAY) provides a ligand contact to substrate. NADP(+) contacts are provided by residues 179–182 (STAT), 202–205 (SPSN), Y220, and 267–268 (VE). Residue 289–293 (VMTVW) coordinates substrate. 358–359 (PS) is a binding site for NADP(+).

Belongs to the zinc-containing alcohol dehydrogenase family. In terms of assembly, monomer.

The catalysed reaction is malate + 6 malonyl-CoA + acetyl-CoA + 2 AH2 + 2 S-adenosyl-L-methionine + 5 NADPH + 9 H(+) = trihazone A + 2 A + 2 S-adenosyl-L-homocysteine + 6 CO2 + 5 NADP(+) + 7 CoA + 6 H2O. It participates in secondary metabolite biosynthesis. In terms of biological role, trans-enoyl reductase; part of the gene cluster that produces the tetronate natural products trihazones. The PKS-NRPS synthetase thnA with the help of the trans-enoyl reductase thnE are responsible for the synthesis of the carboxylmethyl containing trihazone A. The PKS portion of thnA synthesizes beta-keto-triene chain from one acetyl-CoA and 6 equivalents of malonyl-CoA, in collaboration with thnE, which selectively reduces the enoyl intermediate during the first and fourth iteration of the PKS. The NRPS domain selects and activates malate, of which the alpha-hydroxyl group attacks the completed polyketide acyl-S-ACP chain to form the ester product. Intramolecular Dieckmann cyclization catalyzed by the terminal reductase domain releases the product as trihazone A from the PKS-NPRS. The pathway begins with the formation of trihazone A by the hybrid PKS-NRPS synthetase thnA and the trans-enoyl reductase thnE. Trihazone A is further decarboxylated by the 2-oxoglutarate-dependent dioxygenase thnC to produce trihazone D. The function of the FAD-dependent monooxygenase thnD has still to be identified. This Trichoderma harzianum (Hypocrea lixii) protein is Trans-enoyl reductase thnE.